Consider the following 293-residue polypeptide: Coatomer subunit epsilon-2 (293 aa).

The protein belongs to the COPE family. As to quaternary structure, oligomeric complex that consists of at least the alpha, beta, beta', gamma, delta, epsilon and zeta subunits.

The protein resides in the cytoplasm. The protein localises to the golgi apparatus membrane. It localises to the cytoplasmic vesicle. Its subcellular location is the COPI-coated vesicle membrane. Its function is as follows. The coatomer is a cytosolic protein complex that binds to dilysine motifs and reversibly associates with Golgi non-clathrin-coated vesicles, which further mediate biosynthetic protein transport from the ER, via the Golgi up to the trans Golgi network. The coatomer complex is required for budding from Golgi membranes, and is essential for the retrograde Golgi-to-ER transport of dilysine-tagged proteins. In Arabidopsis thaliana (Mouse-ear cress), this protein is Coatomer subunit epsilon-2.